A 207-amino-acid polypeptide reads, in one-letter code: High frequency lysogenization protein HflD homolog (207 aa).

It belongs to the HflD family.

Its subcellular location is the cytoplasm. It localises to the cell inner membrane. This chain is High frequency lysogenization protein HflD homolog, found in Azotobacter vinelandii (strain DJ / ATCC BAA-1303).